The following is a 94-amino-acid chain: Small ribosomal subunit protein bS18 (94 aa).

Belongs to the bacterial ribosomal protein bS18 family. In terms of assembly, part of the 30S ribosomal subunit. Forms a tight heterodimer with protein bS6.

Functionally, binds as a heterodimer with protein bS6 to the central domain of the 16S rRNA, where it helps stabilize the platform of the 30S subunit. This chain is Small ribosomal subunit protein bS18, found in Polaromonas sp. (strain JS666 / ATCC BAA-500).